A 152-amino-acid polypeptide reads, in one-letter code: MSVYQVITVPNDILRGKALPVKEINAGVLRVLDNMRDTMYAADGVGLAAPQIGIPKRMIVVDIGENLLELINPEILKQEGNQLGSEGCLSVPGIVGRVNRAKKVLVKGLDRNGQELNFAAVDLLAKVLQHEIDHLEGILFIDKAIETRIEKL.

Fe cation contacts are provided by cysteine 88 and histidine 130. Glutamate 131 is an active-site residue. Residue histidine 134 coordinates Fe cation.

It belongs to the polypeptide deformylase family. Requires Fe(2+) as cofactor.

The catalysed reaction is N-terminal N-formyl-L-methionyl-[peptide] + H2O = N-terminal L-methionyl-[peptide] + formate. Its function is as follows. Removes the formyl group from the N-terminal Met of newly synthesized proteins. Requires at least a dipeptide for an efficient rate of reaction. N-terminal L-methionine is a prerequisite for activity but the enzyme has broad specificity at other positions. The polypeptide is Peptide deformylase (Syntrophomonas wolfei subsp. wolfei (strain DSM 2245B / Goettingen)).